The following is a 314-amino-acid chain: Transcriptional regulatory protein GlnL (314 aa).

Residues 2 to 118 form the Response regulatory domain; sequence RFFIADDDRA…EIVTVLQKVK (117 aa). Asp-54 carries the 4-aspartylphosphate modification.

Post-translationally, phosphorylated by GlnK.

The protein resides in the cytoplasm. Member of the two-component regulatory system GlnL/GlnK that positively regulates the expression of the glsA-glnT operon in response to glutamine. GlnL binds the promoter region of glsA-glnT in vitro. The chain is Transcriptional regulatory protein GlnL (glnL) from Bacillus subtilis (strain 168).